The chain runs to 304 residues: Hairy/enhancer-of-split related with YRPW motif protein 1 (304 aa).

The tract at residues 1–52 (MKRAHPEYSSSDSELDETIEVEKESADENGNLSSALGSMSPTTSSQILARKR) is disordered. Residues 28–47 (ENGNLSSALGSMSPTTSSQI) show a composition bias toward polar residues. The interval 48 to 117 (LARKRRRGII…GGKGYFDAHA (70 aa)) is transcriptional repression and interaction with NCOR1 and SIN3A. In terms of domain architecture, bHLH spans 49–104 (ARKRRRGIIEKRRRDRINNSLSELRRLVPSAFEKQGSAKLEKAEILQMTVDHLKML). Residues 122–158 (YRSLGFRECLAEVARYLSIIEGLDASDPLRVRLVSHL) enclose the Orange domain. The interval 196–234 (LPQNGHGNAGTTASPTEPHHQGRLGSAHPEAPALRAPPS) is disordered. Residues 200-210 (GHGNAGTTASP) show a composition bias toward polar residues. The short motif at 294–297 (YRPW) is the YRPW motif element.

This sequence belongs to the HEY family. As to quaternary structure, self-associates. Interacts with HES1 and HEYL. Interacts with HDAC1, NCOR1 and SIN3A. Interacts with GATA4 and GATA6. Interacts with CCDC89/BOIP. As to expression, expressed in the somitic mesoderm, the central nervous system, the kidney, the heart, nasal epithelium, and limbs.

It localises to the nucleus. In terms of biological role, transcriptional repressor which binds preferentially to the canonical E box sequence 5'-CACGTG-3'. Downstream effector of Notch signaling required for cardiovascular development. Specifically required for the Notch-induced endocardial epithelial to mesenchymal transition, which is itself criticial for cardiac valve and septum development. May be required in conjunction with HEY2 to specify arterial cell fate or identity. Promotes maintenance of neuronal precursor cells and glial versus neuronal fate specification. Represses transcription by the cardiac transcriptional activators GATA4 and GATA6 and by the neuronal bHLH factors ASCL1/MASH1 and NEUROD4/MATH3. Involved in the regulation of liver cancer cells self-renewal. This chain is Hairy/enhancer-of-split related with YRPW motif protein 1 (HEY1), found in Homo sapiens (Human).